The following is a 283-amino-acid chain: Nudix hydrolase 6 (283 aa).

One can recognise a Nudix hydrolase domain in the interval 101–233 (SHRIGVGAFV…KKELFRFMAN (133 aa)). The short motif at 139-160 (GVVKEGENIWEGALREVEEETG) is the Nudix box element. 3 residues coordinate a divalent metal cation: Glu-154, Glu-158, and Glu-204.

Belongs to the Nudix hydrolase family. Requires Mg(2+) as cofactor. Mn(2+) is required as a cofactor. Expressed in stems and leaves. Weakly or not expressed in roots.

It catalyses the reaction ADP-D-ribose + H2O = D-ribose 5-phosphate + AMP + 2 H(+). It carries out the reaction NAD(+) + H2O = beta-nicotinamide D-ribonucleotide + AMP + 2 H(+). The enzyme catalyses NADH + H2O = reduced beta-nicotinamide D-ribonucleotide + AMP + 2 H(+). In terms of biological role, probably mediates the hydrolysis of some nucleoside diphosphate derivatives. In vitro, it can use both NADH and ADP-ribose as substrates; however the relevance of such substrates in vivo is unclear. In Arabidopsis thaliana (Mouse-ear cress), this protein is Nudix hydrolase 6.